Reading from the N-terminus, the 490-residue chain is Metalloreductase STEAP2 (490 aa).

Residues 38-41 (SGDF), 60-61 (SR), 93-100 (IHREHYTS), N118, and A151 contribute to the NADP(+) site. FAD-binding residues include W152 and D160. The helical transmembrane segment at 208–228 (LFTLWRGPVVVAISLATFFFL) threads the bilayer. A Fe(3+)-binding site is contributed by Y229. The helical transmembrane segment at 259-279 (LPIVAITLLSLVYLAGLLAAA) threads the bilayer. A Ferric oxidoreductase domain is found at 259 to 407 (LPIVAITLLS…LGYVALLIST (149 aa)). Residues Q281 and R302 each coordinate FAD. 4 helical membrane passes run 305 to 325 (LGLL…CLPM), 359 to 379 (MYIS…VTSI), 393 to 413 (FIQS…VLIY), and 432 to 452 (FVLA…LFLP). A heme b-binding site is contributed by H316. Residue Y319 participates in Fe(3+) binding. Residues S378 and Q395 each coordinate FAD. Heme b is bound at residue H409. The residue at position 483 (S483) is a Phosphoserine.

The protein belongs to the STEAP family. The cofactor is FAD. It depends on heme b as a cofactor. Expressed at high levels in prostate and at significantly lower levels in heart, brain, kidney, pancreas, and ovary.

It is found in the endosome membrane. It localises to the cell membrane. The catalysed reaction is 2 Fe(2+) + NADP(+) + H(+) = 2 Fe(3+) + NADPH. It catalyses the reaction 2 Cu(+) + NADP(+) + H(+) = 2 Cu(2+) + NADPH. Integral membrane protein that functions as a NADPH-dependent ferric-chelate reductase, using NADPH from one side of the membrane to reduce a Fe(3+) chelate that is bound on the other side of the membrane. Mediates sequential transmembrane electron transfer from NADPH to FAD and onto heme, and finally to the Fe(3+) chelate. Can also reduce Cu(2+) to Cu(1+). This chain is Metalloreductase STEAP2 (STEAP2), found in Homo sapiens (Human).